Consider the following 201-residue polypeptide: Small ribosomal subunit protein uS4c (201 aa).

Residues Met89–Pro157 form the S4 RNA-binding domain.

It belongs to the universal ribosomal protein uS4 family. As to quaternary structure, part of the 30S ribosomal subunit. Contacts protein S5. The interaction surface between S4 and S5 is involved in control of translational fidelity.

It is found in the plastid. The protein localises to the chloroplast. In terms of biological role, one of the primary rRNA binding proteins, it binds directly to 16S rRNA where it nucleates assembly of the body of the 30S subunit. Its function is as follows. With S5 and S12 plays an important role in translational accuracy. The chain is Small ribosomal subunit protein uS4c (rps4) from Triticum aestivum (Wheat).